A 350-amino-acid chain; its full sequence is 2-oxoglutarate-dependent ethylene/succinate-forming enzyme (350 aa).

Residues 166–286 (GWHHMRVLRF…RFACAYFHEP (121 aa)) enclose the Fe2OG dioxygenase domain. Residues His189 and His268 each coordinate Fe cation.

The protein belongs to the iron/ascorbate-dependent oxidoreductase family. In terms of assembly, monomer. It depends on Fe(2+) as a cofactor.

It catalyses the reaction 2-oxoglutarate + O2 + 2 H(+) = ethene + 3 CO2 + H2O. The catalysed reaction is L-arginine + 2-oxoglutarate + O2 = guanidine + L-glutamate 5-semialdehyde + succinate + CO2. It participates in alkene biosynthesis; ethylene biosynthesis via 2-oxoglutarate. In terms of biological role, simultaneously catalyzes two reactions, namely formation of ethylene and of succinate from 2-oxoglutarate. The chain is 2-oxoglutarate-dependent ethylene/succinate-forming enzyme (efe) from Pseudomonas amygdali pv. sesami (Pseudomonas syringae pv. sesami).